The primary structure comprises 87 residues: FXYD domain-containing ion transport regulator 3 (87 aa).

An N-terminal signal peptide occupies residues 1–20; sequence MQKVTLGLLVFLAGFPVLDA. The Extracellular segment spans residues 21–38; that stretch reads NDLEDKNSPFYYDWHSLQ. A helical membrane pass occupies residues 39-59; sequence VGGLICAGVLCAMGIIIVMSA. The Cytoplasmic portion of the chain corresponds to 60–87; it reads KCKCKFGQKSGHHPGETPPLITPGSAQS. A disordered region spans residues 66-87; the sequence is GQKSGHHPGETPPLITPGSAQS.

It belongs to the FXYD family. Regulatory subunit of the sodium/potassium-transporting ATPase which is composed of a catalytic alpha subunit, a non-catalytic beta subunit and an additional regulatory subunit. Interacts with catalytic alpha subunit ATP1A1. Also interacts with non-catalytic beta subunit ATP1B1. Interacts with the ATP1A1-ATP1B1, ATP1A2-ATP1B1 and ATP1A3-ATP1B1 NKA isozymes. Glutathionylated. In terms of tissue distribution, isoform 1: Expressed mainly in differentiated cells (at protein level). Isoform 2: Expressed mainly in undifferentiated cells (at protein level).

It localises to the cell membrane. Its function is as follows. Associates with and regulates the activity of the sodium/potassium-transporting ATPase (NKA) which transports Na(+) out of the cell and K(+) into the cell. Reduces glutathionylation of the NKA beta-1 subunit ATP1B1, thus reversing glutathionylation-mediated inhibition of ATP1B1. Induces a hyperpolarization-activated chloride current when expressed in Xenopus oocytes. Decreases the apparent K+ and Na+ affinity of the sodium/potassium-transporting ATPase over a large range of membrane potentials. In terms of biological role, decreases the apparent K+ affinity of the sodium/potassium-transporting ATPase only at slightly negative and positive membrane potentials and increases the apparent Na+ affinity over a large range of membrane potentials. In Homo sapiens (Human), this protein is FXYD domain-containing ion transport regulator 3 (FXYD3).